The sequence spans 751 residues: Catalase-peroxidase (751 aa).

Residues M1–D21 are disordered. A cross-link (tryptophyl-tyrosyl-methioninium (Trp-Tyr) (with M-270)) is located at residues W90 to Y244. H91 (proton acceptor) is an active-site residue. The interval Y195 to A227 is disordered. Residues P214–A227 are compositionally biased toward basic and acidic residues. The tryptophyl-tyrosyl-methioninium (Tyr-Met) (with W-90) cross-link spans Y244–M270. Position 285 (H285) interacts with heme b. Positions G364–P385 are disordered.

It belongs to the peroxidase family. Peroxidase/catalase subfamily. Homodimer or homotetramer. Heme b serves as cofactor. Post-translationally, formation of the three residue Trp-Tyr-Met cross-link is important for the catalase, but not the peroxidase activity of the enzyme.

The catalysed reaction is H2O2 + AH2 = A + 2 H2O. The enzyme catalyses 2 H2O2 = O2 + 2 H2O. Bifunctional enzyme with both catalase and broad-spectrum peroxidase activity. This Pseudomonas putida (strain ATCC 47054 / DSM 6125 / CFBP 8728 / NCIMB 11950 / KT2440) protein is Catalase-peroxidase.